A 96-amino-acid polypeptide reads, in one-letter code: MKLRPLHDRVIVKRLEQETKTASGIVIPDNAAEKPDQGEVLAVGPGKRNDKGDFIALNCKVGDRVLFGKYSGQTVKVDGDELLVMREEDLFAVVEK.

Belongs to the GroES chaperonin family. In terms of assembly, heptamer of 7 subunits arranged in a ring. Interacts with the chaperonin GroEL.

It is found in the cytoplasm. Together with the chaperonin GroEL, plays an essential role in assisting protein folding. The GroEL-GroES system forms a nano-cage that allows encapsulation of the non-native substrate proteins and provides a physical environment optimized to promote and accelerate protein folding. GroES binds to the apical surface of the GroEL ring, thereby capping the opening of the GroEL channel. The protein is Co-chaperonin GroES of Methylibium petroleiphilum (strain ATCC BAA-1232 / LMG 22953 / PM1).